The chain runs to 138 residues: Superoxide dismutase [Mn] (138 aa).

The Mn(2+) site is built by H2, H49, D133, and H137.

It belongs to the iron/manganese superoxide dismutase family. It depends on Mn(2+) as a cofactor.

It carries out the reaction 2 superoxide + 2 H(+) = H2O2 + O2. In terms of biological role, destroys superoxide anion radicals which are normally produced within the cells and which are toxic to biological systems. This is Superoxide dismutase [Mn] (sodA) from Mycobacterium szulgai.